The following is a 335-amino-acid chain: Holliday junction branch migration complex subunit RuvB (335 aa).

The large ATPase domain (RuvB-L) stretch occupies residues 1-181 (MDRIVEIEKY…FGMQFRLEFY (181 aa)). ATP-binding positions include leucine 20, arginine 21, glycine 62, lysine 65, threonine 66, threonine 67, 128–130 (EDY), arginine 171, tyrosine 181, and arginine 218. Residue threonine 66 participates in Mg(2+) binding. Residues 182–252 (KDSELALILQ…RANEALNSLG (71 aa)) form a small ATPAse domain (RuvB-S) region. Residues 255–335 (ELGFDAMDLR…LNYEKTLFEE (81 aa)) form a head domain (RuvB-H) region. 2 residues coordinate DNA: arginine 309 and arginine 314.

It belongs to the RuvB family. As to quaternary structure, homohexamer. Forms an RuvA(8)-RuvB(12)-Holliday junction (HJ) complex. HJ DNA is sandwiched between 2 RuvA tetramers; dsDNA enters through RuvA and exits via RuvB. An RuvB hexamer assembles on each DNA strand where it exits the tetramer. Each RuvB hexamer is contacted by two RuvA subunits (via domain III) on 2 adjacent RuvB subunits; this complex drives branch migration. In the full resolvosome a probable DNA-RuvA(4)-RuvB(12)-RuvC(2) complex forms which resolves the HJ.

The protein resides in the cytoplasm. It catalyses the reaction ATP + H2O = ADP + phosphate + H(+). Its function is as follows. The RuvA-RuvB-RuvC complex processes Holliday junction (HJ) DNA during genetic recombination and DNA repair, while the RuvA-RuvB complex plays an important role in the rescue of blocked DNA replication forks via replication fork reversal (RFR). RuvA specifically binds to HJ cruciform DNA, conferring on it an open structure. The RuvB hexamer acts as an ATP-dependent pump, pulling dsDNA into and through the RuvAB complex. RuvB forms 2 homohexamers on either side of HJ DNA bound by 1 or 2 RuvA tetramers; 4 subunits per hexamer contact DNA at a time. Coordinated motions by a converter formed by DNA-disengaged RuvB subunits stimulates ATP hydrolysis and nucleotide exchange. Immobilization of the converter enables RuvB to convert the ATP-contained energy into a lever motion, pulling 2 nucleotides of DNA out of the RuvA tetramer per ATP hydrolyzed, thus driving DNA branch migration. The RuvB motors rotate together with the DNA substrate, which together with the progressing nucleotide cycle form the mechanistic basis for DNA recombination by continuous HJ branch migration. Branch migration allows RuvC to scan DNA until it finds its consensus sequence, where it cleaves and resolves cruciform DNA. This chain is Holliday junction branch migration complex subunit RuvB, found in Campylobacter jejuni subsp. doylei (strain ATCC BAA-1458 / RM4099 / 269.97).